Consider the following 333-residue polypeptide: Ketol-acid reductoisomerase (NADP(+)) (333 aa).

Positions 2 to 182 (AELFYDDDAD…GGTRAGVIKT (181 aa)) constitute a KARI N-terminal Rossmann domain. Residues 25–28 (YGSQ), S51, S53, and 83–86 (DPIQ) contribute to the NADP(+) site. Residue H108 is part of the active site. Position 134 (G134) interacts with NADP(+). Positions 183–328 (TFTEETETDL…RELRKLMSWV (146 aa)) constitute a KARI C-terminal knotted domain. Mg(2+) contacts are provided by D191, E195, E227, and E231. S252 serves as a coordination point for substrate.

The protein belongs to the ketol-acid reductoisomerase family. It depends on Mg(2+) as a cofactor.

The enzyme catalyses (2R)-2,3-dihydroxy-3-methylbutanoate + NADP(+) = (2S)-2-acetolactate + NADPH + H(+). It carries out the reaction (2R,3R)-2,3-dihydroxy-3-methylpentanoate + NADP(+) = (S)-2-ethyl-2-hydroxy-3-oxobutanoate + NADPH + H(+). It participates in amino-acid biosynthesis; L-isoleucine biosynthesis; L-isoleucine from 2-oxobutanoate: step 2/4. Its pathway is amino-acid biosynthesis; L-valine biosynthesis; L-valine from pyruvate: step 2/4. Involved in the biosynthesis of branched-chain amino acids (BCAA). Catalyzes an alkyl-migration followed by a ketol-acid reduction of (S)-2-acetolactate (S2AL) to yield (R)-2,3-dihydroxy-isovalerate. In the isomerase reaction, S2AL is rearranged via a Mg-dependent methyl migration to produce 3-hydroxy-3-methyl-2-ketobutyrate (HMKB). In the reductase reaction, this 2-ketoacid undergoes a metal-dependent reduction by NADPH to yield (R)-2,3-dihydroxy-isovalerate. This chain is Ketol-acid reductoisomerase (NADP(+)), found in Streptomyces griseus subsp. griseus (strain JCM 4626 / CBS 651.72 / NBRC 13350 / KCC S-0626 / ISP 5235).